We begin with the raw amino-acid sequence, 202 residues long: PITH domain-containing protein 1 (202 aa).

A PITH domain is found at 11–184; the sequence is SHGVDDGIEY…IVNTVYESKP (174 aa).

This sequence belongs to the PITHD1 family.

This Dictyostelium discoideum (Social amoeba) protein is PITH domain-containing protein 1.